A 235-amino-acid chain; its full sequence is tRNA (guanine-N(1)-)-methyltransferase (235 aa).

S-adenosyl-L-methionine contacts are provided by residues glycine 112 and 132-137 (IGDYVI).

It belongs to the RNA methyltransferase TrmD family. As to quaternary structure, homodimer.

It localises to the cytoplasm. The enzyme catalyses guanosine(37) in tRNA + S-adenosyl-L-methionine = N(1)-methylguanosine(37) in tRNA + S-adenosyl-L-homocysteine + H(+). In terms of biological role, specifically methylates guanosine-37 in various tRNAs. The sequence is that of tRNA (guanine-N(1)-)-methyltransferase from Anaplasma marginale (strain Florida).